Consider the following 161-residue polypeptide: Pathogenesis-related protein 1 (161 aa).

The N-terminal stretch at M1 to A26 is a signal peptide. Residues V34–Y149 enclose the SCP domain. 3 cysteine pairs are disulfide-bonded: C70-C138, C113-C117, and C133-C147.

It belongs to the CRISP family. In terms of tissue distribution, expressed in flowers, stems and roots but not in leaves.

Probably involved in the defense reaction of plants against pathogens. This is Pathogenesis-related protein 1 from Arabidopsis thaliana (Mouse-ear cress).